We begin with the raw amino-acid sequence, 393 residues long: S-adenosylmethionine synthase (393 aa).

Histidine 17 serves as a coordination point for ATP. Aspartate 19 contributes to the Mg(2+) binding site. Glutamate 45 is a K(+) binding site. Residues glutamate 58 and glutamine 106 each contribute to the L-methionine site. The interval 106-116 (QSAHIAQGVDA) is flexible loop. ATP-binding positions include 171-173 (DAK), 237-238 (KF), aspartate 246, 252-253 (RK), alanine 269, and lysine 273. Aspartate 246 is a binding site for L-methionine. Lysine 277 is a binding site for L-methionine.

Belongs to the AdoMet synthase family. As to quaternary structure, homotetramer; dimer of dimers. The cofactor is Mg(2+). K(+) is required as a cofactor.

Its subcellular location is the cytoplasm. The enzyme catalyses L-methionine + ATP + H2O = S-adenosyl-L-methionine + phosphate + diphosphate. It functions in the pathway amino-acid biosynthesis; S-adenosyl-L-methionine biosynthesis; S-adenosyl-L-methionine from L-methionine: step 1/1. Its function is as follows. Catalyzes the formation of S-adenosylmethionine (AdoMet) from methionine and ATP. The overall synthetic reaction is composed of two sequential steps, AdoMet formation and the subsequent tripolyphosphate hydrolysis which occurs prior to release of AdoMet from the enzyme. This Jannaschia sp. (strain CCS1) protein is S-adenosylmethionine synthase.